A 1213-amino-acid chain; its full sequence is DNA-directed RNA polymerase subunit beta' (1213 aa).

The Zn(2+) site is built by cysteine 60, cysteine 62, cysteine 75, and cysteine 78. The Mg(2+) site is built by aspartate 449, aspartate 451, and aspartate 453. Zn(2+)-binding residues include cysteine 818, cysteine 892, cysteine 899, and cysteine 902.

This sequence belongs to the RNA polymerase beta' chain family. In terms of assembly, the RNAP catalytic core consists of 2 alpha, 1 beta, 1 beta' and 1 omega subunit. When a sigma factor is associated with the core the holoenzyme is formed, which can initiate transcription. Mg(2+) serves as cofactor. It depends on Zn(2+) as a cofactor.

The enzyme catalyses RNA(n) + a ribonucleoside 5'-triphosphate = RNA(n+1) + diphosphate. Its function is as follows. DNA-dependent RNA polymerase catalyzes the transcription of DNA into RNA using the four ribonucleoside triphosphates as substrates. The polypeptide is DNA-directed RNA polymerase subunit beta' (Lactiplantibacillus plantarum (strain ATCC BAA-793 / NCIMB 8826 / WCFS1) (Lactobacillus plantarum)).